The chain runs to 310 residues: MINAIRTPDQRFSNLDQYPFSPNYLDDLPGYPGLRAHYLDEGNSDAEDVFLCLHGEPTWSYLYRKMIPVFAESGARVIAPDFFGFGKSDKPVDEEDYTFEFHRNFLLALIERLDLRNITLVVQDWGGFLGLTLPMADPSRFKRLIIMNACLMTDPVTQPAFSAFVTQPADGFTAWKYDLVTPSDLRLDQFMKRWAPTLTEAEASAYAAPFPDTSYQAGVRKFPKMVAQRDQACIDISTEAISFWQNDWNGQTFMAIGMKDKLLGPDVMYPMKALINGCPEPLEIADAGHFVQEFGEQVAREALKHFAETE.

Residues 49-295 (VFLCLHGEPT…DAGHFVQEFG (247 aa)) form the AB hydrolase-1 domain. Catalysis depends on Asp-124, which acts as the Nucleophile. The chloride site is built by Trp-125 and Trp-175. Asp-260 serves as the catalytic Proton donor. The active-site Proton acceptor is His-289.

It belongs to the haloalkane dehalogenase family. Type 1 subfamily. Monomer.

The catalysed reaction is 1-haloalkane + H2O = a halide anion + a primary alcohol + H(+). It carries out the reaction 1,2-dichloroethane + H2O = 2-chloroethanol + chloride + H(+). It functions in the pathway xenobiotic degradation; 1,2-dichloroethane degradation; glycolate from 1,2-dichloroethane: step 1/4. Inhibited by thiol reagents such as p-chloromercuribenzoate and iodoacetamide. Functionally, catalyzes hydrolytic cleavage of carbon-halogen bonds in halogenated aliphatic compounds, leading to the formation of the corresponding primary alcohols, halide ions and protons. Has a broad substrate specificity, which includes terminally mono- and di- chlorinated and brominated alkanes (up to C4 only). The highest activity was found with 1,2-dichloroethane, 1,3-dichloropropane, and 1,2-dibromoethane. The chain is Haloalkane dehalogenase (dhlA) from Xanthobacter autotrophicus.